Reading from the N-terminus, the 397-residue chain is UDP-GlcNAc:betaGal beta-1,3-N-acetylglucosaminyltransferase 8 (397 aa).

Residues 1–6 are Cytoplasmic-facing; sequence MRCPKC. Residues 7 to 23 traverse the membrane as a helical; Signal-anchor for type II membrane protein segment; the sequence is LLCLSALLTLLGLKVYI. At 24–397 the chain is on the lumenal side; sequence EWTSESRLSK…KQLQDPRLQC (374 aa). Residues 33–58 are disordered; the sequence is KAYPSPRGTPPSPTPANPEPTLPANL. Pro residues predominate over residues 39-53; it reads RGTPPSPTPANPEPT. Residue Asn57 is glycosylated (N-linked (GlcNAc...) asparagine).

The protein belongs to the glycosyltransferase 31 family. In terms of assembly, interacts with B3GNT2; this interaction greatly increases B3GNT2 catalytic activity, independently of B3GNT8 enzymatic activity. In terms of tissue distribution, highly expressed in small intestine, pancreas, spleen, bone marrow, lung, throat, and ileum, and weakly in fetal brain, cerebellum, heart, liver, tongue, breast, uteri, and testis. Not detected in colon. Differentially expressed in human tumor cell lines.

It is found in the golgi apparatus membrane. The protein operates within protein modification; protein glycosylation. In terms of biological role, beta-1,3-N-acetylglucosaminyltransferase that plays a role in the elongation of specific branch structures of multiantennary N-glycans. Has strong activity towards tetraantennary N-glycans and 2,6 triantennary glycans. The protein is UDP-GlcNAc:betaGal beta-1,3-N-acetylglucosaminyltransferase 8 of Homo sapiens (Human).